Consider the following 61-residue polypeptide: Small ribosomal subunit protein uS14 (61 aa).

Residues cysteine 24, cysteine 27, cysteine 40, and cysteine 43 each coordinate Zn(2+).

This sequence belongs to the universal ribosomal protein uS14 family. Zinc-binding uS14 subfamily. As to quaternary structure, part of the 30S ribosomal subunit. Contacts proteins S3 and S10. Requires Zn(2+) as cofactor.

Functionally, binds 16S rRNA, required for the assembly of 30S particles and may also be responsible for determining the conformation of the 16S rRNA at the A site. The sequence is that of Small ribosomal subunit protein uS14 from Herpetosiphon aurantiacus (strain ATCC 23779 / DSM 785 / 114-95).